Reading from the N-terminus, the 398-residue chain is Nicotinate phosphoribosyltransferase (398 aa).

A Phosphohistidine; by autocatalysis modification is found at H214.

This sequence belongs to the NAPRTase family. Post-translationally, transiently phosphorylated on a His residue during the reaction cycle. Phosphorylation strongly increases the affinity for substrates and increases the rate of nicotinate D-ribonucleotide production. Dephosphorylation regenerates the low-affinity form of the enzyme, leading to product release.

It carries out the reaction nicotinate + 5-phospho-alpha-D-ribose 1-diphosphate + ATP + H2O = nicotinate beta-D-ribonucleotide + ADP + phosphate + diphosphate. Its pathway is cofactor biosynthesis; NAD(+) biosynthesis; nicotinate D-ribonucleotide from nicotinate: step 1/1. Functionally, catalyzes the synthesis of beta-nicotinate D-ribonucleotide from nicotinate and 5-phospho-D-ribose 1-phosphate at the expense of ATP. The protein is Nicotinate phosphoribosyltransferase of Xanthomonas campestris pv. campestris (strain B100).